The following is a 633-amino-acid chain: Basic helix-loop-helix ARNT-like protein 1 (633 aa).

Positions 1 to 65 (MADQRMDISS…GMDTDKDDQH (65 aa)) are disordered. Phosphoserine; by GSK3-beta is present on S17. Residues 24–33 (ISSSLSTSGV) are compositionally biased toward polar residues. The Nuclear localization signal signature appears at 36 to 41 (NRKRKG). The 54-residue stretch at 79–132 (NAREAHSQIEKRRRDKMNSFIDELASLVPTCNAMSRKLDKLTVLRMAVQHMKTL) folds into the bHLH domain. At S85 the chain carries Phosphoserine. Residue S97 is modified to Phosphoserine; by CK2. Residues 149 to 159 (LSDDELKHLIL) carry the Nuclear export signal 1 motif. The PAS 1 domain occupies 150 to 222 (SDDELKHLIL…EQLSSSDTAP (73 aa)). Residue K259 forms a Glycyl lysine isopeptide (Lys-Gly) (interchain with G-Cter in SUMO2 and SUMO3) linkage. A Glycyl lysine isopeptide (Lys-Gly) (interchain with G-Cter in SUMO) cross-link involves residue K266. The PAS 2 domain occupies 333–403 (PQPVNGEIRV…ECHRQVLQTR (71 aa)). The Nuclear export signal 2 signature appears at 368–376 (LAYLPQELL). Positions 408–451 (TNCYKFKIKDGSFITLRSRWFSFMNPWTKEVEYIVSTNTVVSTS) constitute a PAC domain. Disordered regions lie at residues 469–499 (SMDSVLQAGEGGPKRSHPTVPGIPGGTRAGA) and 518–578 (GSSP…DNSS). Low complexity predominate over residues 518–528 (GSSPSSCGSSP). At K545 the chain carries N6-acetyllysine. Polar residues predominate over residues 563–578 (GQIQDSSGYPYSDNSS).

Component of the circadian clock oscillator which includes the CRY1/2 proteins, CLOCK or NPAS2, BMAL1 or BMAL2, CSNK1D and/or CSNK1E, TIMELESS and the PER1/2/3 proteins. Forms a heterodimer with CLOCK. The CLOCK-BMAL1 heterodimer is required for E-box-dependent transactivation, for CLOCK nuclear translocation and degradation, and, for phosphorylation of both CLOCK and BMAL1. Interacts with PER1, PER2, CRY1 and CRY2 and this interaction requires a translocation to the nucleus. Interaction of the CLOCK-BMAL1 heterodimer with PER or CRY inhibits transcription activation. Interacts with NPAS2. Post-translationally, ubiquitinated, leading to its proteasomal degradation. Deubiquitinated by USP9X. O-glycosylated; contains O-GlcNAc. O-glycosylation by OGT prevents protein degradation by inhibiting ubiquitination. It also stabilizes the CLOCK-BMAL1 heterodimer thereby increasing CLOCK-BMAL1-mediated transcription of genes in the negative loop of the circadian clock such as PER1/2/3 and CRY1/2. In terms of processing, acetylated on Lys-545 by CLOCK during the repression phase of the circadian cycle. Acetylation facilitates recruitment of CRY1 protein and initiates the repression phase of the circadian cycle. Acetylated at Lys-545 by KAT5 during the activation phase of the cycle, leading to recruitment of the positive transcription elongation factor b (P-TEFb) and BRD4, followed by productive elongation of circadian transcripts. Deacetylated by SIRT1, which may result in decreased protein stability. Post-translationally, phosphorylated upon dimerization with CLOCK. Phosphorylation enhances the transcriptional activity, alters the subcellular localization and decreases the stability of the CLOCK-BMAL1 heterodimer by promoting its degradation. Phosphorylation shows circadian variations in the liver with a peak between CT10 to CT14. Phosphorylation at Ser-97 by CK2 is essential for its nuclear localization, its interaction with CLOCK and controls CLOCK nuclear entry. Dephosphorylation at Ser-85 is important for dimerization with CLOCK and transcriptional activity. Sumoylated on Lys-266 upon dimerization with CLOCK. Predominantly conjugated to poly-SUMO2/3 rather than SUMO1 and the level of these conjugates undergo rhythmic variation, peaking at CT9-CT12. Sumoylation localizes it exclusively to the PML body and promotes its ubiquitination in the PML body, ubiquitin-dependent proteasomal degradation and the transcriptional activity of the CLOCK-BMAL1 heterodimer. In terms of processing, undergoes lysosome-mediated degradation in a time-dependent manner in the liver. In terms of tissue distribution, expressed in pineal gland and retina.

The protein localises to the nucleus. The protein resides in the cytoplasm. It localises to the PML body. In terms of biological role, transcriptional activator which forms a core component of the circadian clock. The circadian clock, an internal time-keeping system, regulates various physiological processes through the generation of approximately 24 hour circadian rhythms in gene expression, which are translated into rhythms in metabolism and behavior. It is derived from the Latin roots 'circa' (about) and 'diem' (day) and acts as an important regulator of a wide array of physiological functions including metabolism, sleep, body temperature, blood pressure, endocrine, immune, cardiovascular, and renal function. Consists of two major components: the central clock, residing in the suprachiasmatic nucleus (SCN) of the brain, and the peripheral clocks that are present in nearly every tissue and organ system. Both the central and peripheral clocks can be reset by environmental cues, also known as Zeitgebers (German for 'timegivers'). The predominant Zeitgeber for the central clock is light, which is sensed by retina and signals directly to the SCN. The central clock entrains the peripheral clocks through neuronal and hormonal signals, body temperature and feeding-related cues, aligning all clocks with the external light/dark cycle. Circadian rhythms allow an organism to achieve temporal homeostasis with its environment at the molecular level by regulating gene expression to create a peak of protein expression once every 24 hours to control when a particular physiological process is most active with respect to the solar day. Transcription and translation of core clock components (CLOCK, NPAS2, BMAL1, BMAL2, PER1, PER2, PER3, CRY1 and CRY2) plays a critical role in rhythm generation, whereas delays imposed by post-translational modifications (PTMs) are important for determining the period (tau) of the rhythms (tau refers to the period of a rhythm and is the length, in time, of one complete cycle). A diurnal rhythm is synchronized with the day/night cycle, while the ultradian and infradian rhythms have a period shorter and longer than 24 hours, respectively. Disruptions in the circadian rhythms contribute to the pathology of cardiovascular diseases, cancer, metabolic syndromes and aging. A transcription/translation feedback loop (TTFL) forms the core of the molecular circadian clock mechanism. Transcription factors, CLOCK or NPAS2 and BMAL1 or BMAL2, form the positive limb of the feedback loop, act in the form of a heterodimer and activate the transcription of core clock genes and clock-controlled genes (involved in key metabolic processes), harboring E-box elements (5'-CACGTG-3') within their promoters. The core clock genes: PER1/2/3 and CRY1/2 which are transcriptional repressors form the negative limb of the feedback loop and interact with the CLOCK|NPAS2-BMAL1|BMAL2 heterodimer inhibiting its activity and thereby negatively regulating their own expression. This heterodimer also activates nuclear receptors NR1D1/2 and RORA/B/G, which form a second feedback loop and which activate and repress BMAL1 transcription, respectively. The preferred binding motif for the CLOCK-BMAL1 heterodimer is 5'-CACGTGA-3', which contains a flanking adenine nucleotide at the 3-prime end of the canonical 6-nucleotide E-box sequence. CLOCK specifically binds to the half-site 5'-CAC-3', while BMAL1 binds to the half-site 5'-GTGA-3'. Essential for the rhythmic interaction of CLOCK with ASS1 and plays a critical role in positively regulating CLOCK-mediated acetylation of ASS1. Plays a role in protecting against lethal sepsis by limiting the expression of immune checkpoint protein CD274 in macrophages in a PKM2-dependent manner. The chain is Basic helix-loop-helix ARNT-like protein 1 (BMAL1) from Gallus gallus (Chicken).